The following is a 197-amino-acid chain: MADVEESTAPAEIQSRHVVYCGVCSLPPEYCEYGGTVKKCQEWLEKKYPSMYERLWSEDALAAATSTLSVDAQKRAAKDATKKAAKAEALEAKQNETLASSKIRIKRVERNKRKYVTEVQGLEAFGLELKKVAKEFGSRFATGSSVTKVASGGQEITVQGDVSDDVREFLIKNYKNIPKKNIVLEEPKKKKAEPVEV.

The region spanning 103–174 is the SUI1 domain; sequence IRIKRVERNK…DVREFLIKNY (72 aa).

This sequence belongs to the DENR family. Interacts with the 40S ribosomal subunit.

Its subcellular location is the cytoplasm. The sequence is that of Translation machinery-associated protein 22 (tma22) from Botryotinia fuckeliana (strain B05.10) (Noble rot fungus).